Here is a 449-residue protein sequence, read N- to C-terminus: MISGPFLHFDPTVPLQTVMIGHPATSPLSLPSSSSSPTVADPSNIHCRVCERRYDGSQHFGIDICRACAAFFRRSVAVKKTFVCRRGTNKCELNTVSRKTTCQKCRWMRCLLVGLNVDAVVGRRSPDHVKTTSRDESVKKEDEESDTGSEGKSCEDMDVSHPIEQFQQQISFSVHRPIPTIGNPNIYTTRASLINKVLINYNEFTKSRLDVELSLKHMQQDSKVFGSTGIPIVPATREIISEIYQKQFGLLHIFLKNTFDEYAECDVQEQKRICAMFYPVLWEIESCYWTYRNMPVQPEYETLMMCTQTTYIDSKNVRYWLGNTTGLNESDIQAVEARLENLLTKARNLVLEPMHKLIIKEFEFITLLALNIWAPRNHRGCVSEDRAEQVRDALFDDLHYLYCDGLKIDKYSSRMGEMMCLHTEVQNADMSSTIKNILFSDLNAYLYSI.

Residues 44–122 (NIHCRVCERR…VGLNVDAVVG (79 aa)) constitute a DNA-binding region (nuclear receptor). 2 NR C4-type zinc fingers span residues 47 to 68 (CRVC…CRAC) and 84 to 105 (CRRG…CQKC). The segment covering 125–142 (SPDHVKTTSRDESVKKED) has biased composition (basic and acidic residues). The segment at 125–154 (SPDHVKTTSRDESVKKEDEESDTGSEGKSC) is disordered. The NR LBD domain maps to 200–449 (NYNEFTKSRL…SDLNAYLYSI (250 aa)).

It is found in the nucleus. Functionally, ligand-activated transcription factor. Positively modulates expression of homeobox protein lin-39, perhaps by binding to the sequence motif 5'-TGAC-3' in regulatory regions of the lin-39 gene, acting in the embryo, and also in the vulval lineage. This is Nuclear hormone receptor family member nhr-43 from Caenorhabditis elegans.